We begin with the raw amino-acid sequence, 97 residues long: Co-chaperonin GroES (97 aa).

This sequence belongs to the GroES chaperonin family. As to quaternary structure, heptamer of 7 subunits arranged in a ring. Interacts with the chaperonin GroEL.

It is found in the cytoplasm. Functionally, together with the chaperonin GroEL, plays an essential role in assisting protein folding. The GroEL-GroES system forms a nano-cage that allows encapsulation of the non-native substrate proteins and provides a physical environment optimized to promote and accelerate protein folding. GroES binds to the apical surface of the GroEL ring, thereby capping the opening of the GroEL channel. This chain is Co-chaperonin GroES, found in Arthrobacter sp. (strain FB24).